Here is a 423-residue protein sequence, read N- to C-terminus: Acetylornithine aminotransferase, mitochondrial (423 aa).

Lys276 is modified (N6-(pyridoxal phosphate)lysine).

It belongs to the class-III pyridoxal-phosphate-dependent aminotransferase family. The cofactor is pyridoxal 5'-phosphate.

It is found in the mitochondrion matrix. It carries out the reaction N(2)-acetyl-L-ornithine + 2-oxoglutarate = N-acetyl-L-glutamate 5-semialdehyde + L-glutamate. Its pathway is amino-acid biosynthesis; L-arginine biosynthesis; N(2)-acetyl-L-ornithine from L-glutamate: step 4/4. This is Acetylornithine aminotransferase, mitochondrial (ARG8) from Eremothecium gossypii (strain ATCC 10895 / CBS 109.51 / FGSC 9923 / NRRL Y-1056) (Yeast).